The following is an 849-amino-acid chain: Serrate RNA effector molecule homolog A (849 aa).

2 disordered regions span residues Met1–Asp90 and Lys276–Leu409. Composition is skewed to basic and acidic residues over residues Tyr8–Leu73, Lys276–Asn306, and Glu314–Lys342. Acidic residues predominate over residues Ser354–Thr364. The segment covering Arg381–Lys405 has biased composition (basic and acidic residues).

The protein belongs to the ARS2 family. As to quaternary structure, interacts ncbp1/cbp80.

It is found in the nucleus. It localises to the nucleoplasm. The protein localises to the cytoplasm. In terms of biological role, acts as a mediator between the cap-binding complex (CBC) and the primary microRNAs (miRNAs) processing machinery during cell proliferation. Contributes to the stability and delivery of capped primary miRNA transcripts to the primary miRNA processing complex, thereby playing a role in RNA-mediated gene silencing (RNAi) by miRNAs. The sequence is that of Serrate RNA effector molecule homolog A (srrt-a) from Xenopus laevis (African clawed frog).